Reading from the N-terminus, the 488-residue chain is Auxin transporter-like protein 1 (488 aa).

The tract at residues 1–36 is disordered; sequence MSGEKQAEESIVVSGEDEVAGRKVEDSAAEEDIDGN. Topologically, residues 1 to 64 are cytoplasmic; that stretch reads MSGEKQAEES…DAWFSCASNQ (64 aa). Residues 65-82 traverse the membrane as a helical segment; it reads VAQVLLTLPYSFSQLGML. Residues 83–84 lie on the Extracellular side of the membrane; sequence SG. The chain crosses the membrane as a helical span at residues 85 to 105; that stretch reads ILLQIFYGLMGSWTAYLISVL. At 106–141 the chain is on the cytoplasmic side; the sequence is YVEYRARMEKQEAKSFKNHVIQWFEVLDGLLGPYWK. The chain crosses the membrane as a helical span at residues 142–162; the sequence is AAGLAFNCTFLLFGSVIQLIA. Over 163–178 the chain is Extracellular; sequence CASNIYYINDRLDKRT. The chain crosses the membrane as a helical span at residues 179–199; that stretch reads WTYIFGACCATTVFIPSFHNY. Topologically, residues 200-202 are cytoplasmic; it reads RIW. Residues 203 to 223 form a helical membrane-spanning segment; that stretch reads SFLGLGMTTYTAWYLTIASFL. Residues 224–238 lie on the Extracellular side of the membrane; that stretch reads HGQAEGVTHSGPTKL. Residues 239-259 form a helical membrane-spanning segment; sequence VLYFTGATNILYTFGGHAVTV. Residues 260-273 are Cytoplasmic-facing; the sequence is EIMHAMWKPRKFKS. Residues 274-294 form a helical membrane-spanning segment; the sequence is IYLMATLYVFTLTLPSASAVY. At 295–320 the chain is on the extracellular side; sequence WAFGDQLLNHSNAFSLLPKTRFRDTA. N-linked (GlcNAc...) asparagine glycosylation occurs at N303. Residues 321–341 form a helical membrane-spanning segment; the sequence is VILMLIHQFITFGFACTPLYF. At 342 to 362 the chain is on the cytoplasmic side; the sequence is VWEKAIGMHHTKSLCLRALVR. The helical transmembrane segment at 363–383 threads the bilayer; that stretch reads LPVVVPIWFLAIIFPFFGPIN. Residue S384 is a topological domain, extracellular. The chain crosses the membrane as a helical span at residues 385–405; it reads AVGALLVTFTVYIIPALAHML. Over 406–427 the chain is Cytoplasmic; sequence TYRTASARRNAAEKPPFFIPSW. Residues 428 to 448 form a helical membrane-spanning segment; it reads AGVYVINAFIVVWVLVLGFGF. At 449-488 the chain is on the extracellular side; it reads GGWASMTNFIRQIDTFGLFAKCYQCKPPPAPIAAGAHHRR.

It belongs to the amino acid/polyamine transporter 2 family. Amino acid/auxin permease (AAAP) (TC 2.A.18.1) subfamily.

It is found in the cell membrane. Its function is as follows. Carrier protein involved in proton-driven auxin influx. Mediates the formation of auxin gradient from developing leaves (site of auxin biosynthesis) to tips by contributing to the loading of auxin in vascular tissues and facilitating acropetal (base to tip) auxin transport within inner tissues of the root apex, and basipetal (tip to base) auxin transport within outer tissues of the root apex. The protein is Auxin transporter-like protein 1 (LAX1) of Arabidopsis thaliana (Mouse-ear cress).